A 96-amino-acid chain; its full sequence is uncharacterized protein (96 aa).

It belongs to the NifU family.

This is an uncharacterized protein from Azotobacter vinelandii.